Here is a 306-residue protein sequence, read N- to C-terminus: MGSQLALKSRIASTASLEKIFNAQEMIASSHIAKARDVALNAKPYTDAIFDAVQALVAHTHIDHPIVKKNEDNPRVAVLALTSDRGMAGPYTSSIIRETESLLARLDEQGKQPELYVYGRRGVTYYKYRNRPVAGTWEGDTDQPGVEVAESISKALLDAYMKPADQGGVSELYIVFTEFVNMVVQKVRVLRMLPVELVLPEQPESGPVPESDADAATPLYAFEPSVDEVLDAILPKYIQSRIHECLLTAAASETASRQNAMHTATDNARSLIDELTRKLNASRQASITQELTEIIGSADALNKKEE.

This sequence belongs to the ATPase gamma chain family. In terms of assembly, F-type ATPases have 2 components, CF(1) - the catalytic core - and CF(0) - the membrane proton channel. CF(1) has five subunits: alpha(3), beta(3), gamma(1), delta(1), epsilon(1). CF(0) has three main subunits: a, b and c.

The protein resides in the cell membrane. Functionally, produces ATP from ADP in the presence of a proton gradient across the membrane. The gamma chain is believed to be important in regulating ATPase activity and the flow of protons through the CF(0) complex. The sequence is that of ATP synthase gamma chain from Bifidobacterium adolescentis (strain ATCC 15703 / DSM 20083 / NCTC 11814 / E194a).